The sequence spans 620 residues: MAU2 chromatid cohesion factor homolog (620 aa).

3 TPR repeats span residues 90 to 123 (FDTASLLAQLYQQQEQSSLAKPVLRKAIELSQHN), 445 to 478 (GSFYYVQGLNAFHKSSFHEAKRFLRETLKMANAE), and 485 to 518 (SCSLVLLSHVFLSIGNSKESMNMVTPAMQLASKI).

Belongs to the SCC4/mau-2 family. Component of the cohesin loading complex.

The protein localises to the nucleus. It is found in the nucleoplasm. Functionally, required for association of the cohesin complex with chromatin during interphase. Plays a role in sister chromatid cohesion and normal progression through prometaphase. The protein is MAU2 chromatid cohesion factor homolog of Aedes aegypti (Yellowfever mosquito).